A 399-amino-acid chain; its full sequence is uncharacterized protein (399 aa).

WD repeat units follow at residues 59-99 (EHKD…QICQ), 102-141 (GHKDSIVAIDWSFDGTYIATGGMDSQVRLWKSSTGFEFIT), 144-185 (ETVD…QVMY), 187-227 (HTAP…PECR), 241-280 (ETAAGWTSFDCNAEGNVLFLGGSSGKVKVVNINSSHILAS), 283-322 (AQTESVEAIALCTALPICACASVDGTVALYDSASLKFRKS), 324-363 (PHEQAVIDCKFLPNTPYLLTACADCVIRKWDVRSGQLLGE), and 366-399 (GHQEPILCMAITPDGKRVVTGSDDTELLVFDCEH).

It localises to the cytoplasm. Its subcellular location is the nucleus. This is an uncharacterized protein from Schizosaccharomyces pombe (strain 972 / ATCC 24843) (Fission yeast).